A 418-amino-acid chain; its full sequence is Gamma-glutamyl phosphate reductase (418 aa).

This sequence belongs to the gamma-glutamyl phosphate reductase family.

The protein resides in the cytoplasm. The enzyme catalyses L-glutamate 5-semialdehyde + phosphate + NADP(+) = L-glutamyl 5-phosphate + NADPH + H(+). It functions in the pathway amino-acid biosynthesis; L-proline biosynthesis; L-glutamate 5-semialdehyde from L-glutamate: step 2/2. Functionally, catalyzes the NADPH-dependent reduction of L-glutamate 5-phosphate into L-glutamate 5-semialdehyde and phosphate. The product spontaneously undergoes cyclization to form 1-pyrroline-5-carboxylate. This Desulfosudis oleivorans (strain DSM 6200 / JCM 39069 / Hxd3) (Desulfococcus oleovorans) protein is Gamma-glutamyl phosphate reductase.